The primary structure comprises 367 residues: Flagellin 2 (367 aa).

It belongs to the bacterial flagellin family.

It localises to the secreted. The protein resides in the bacterial flagellum. Its function is as follows. Flagellin is the subunit protein which polymerizes to form the filaments of bacterial flagella. In Proteus mirabilis, this protein is Flagellin 2 (fliC2).